Here is a 249-residue protein sequence, read N- to C-terminus: MTIPDLTAKVVLVDIEGTTTSISFVHEVLFPYAKQNAEHYLLETWETDATKQIVQDLQLLPQFAEYASTLGTQPAVDAQLIAGFVRYLIERDLKVTPLKTLQGLIWAKGYASGQLRGHVYEDVATAFHTWREAGLRIAVYSSGSVAAQKLIFQHSIAGDLLPHLSAHFDTHVGHKQQTESYTKISQILQVEPQHVLFLTDVPLEAAAARAAGMLTILLQRPGNVPLSEEERSSYPVVEDFVALHTLKQP.

Mg(2+)-binding residues include Asp-14 and Glu-16. Residues 141–142 (SS) and Lys-175 contribute to the substrate site. Asp-200 lines the Mg(2+) pocket.

Belongs to the HAD-like hydrolase superfamily. MasA/MtnC family. In terms of assembly, monomer. Mg(2+) serves as cofactor.

It is found in the cytoplasm. The protein resides in the nucleus. The catalysed reaction is 5-methylsulfanyl-2,3-dioxopentyl phosphate + H2O = 1,2-dihydroxy-5-(methylsulfanyl)pent-1-en-3-one + phosphate. It functions in the pathway amino-acid biosynthesis; L-methionine biosynthesis via salvage pathway; L-methionine from S-methyl-5-thio-alpha-D-ribose 1-phosphate: step 3/6. It participates in amino-acid biosynthesis; L-methionine biosynthesis via salvage pathway; L-methionine from S-methyl-5-thio-alpha-D-ribose 1-phosphate: step 4/6. In terms of biological role, bifunctional enzyme that catalyzes the enolization of 2,3-diketo-5-methylthiopentyl-1-phosphate (DK-MTP-1-P) into the intermediate 2-hydroxy-3-keto-5-methylthiopentenyl-1-phosphate (HK-MTPenyl-1-P), which is then dephosphorylated to form the acireductone 1,2-dihydroxy-3-keto-5-methylthiopentene (DHK-MTPene). This chain is Enolase-phosphatase E1, found in Drosophila virilis (Fruit fly).